The chain runs to 419 residues: Vascular endothelial growth factor C (419 aa).

An N-terminal signal peptide occupies residues 1–31 (MHLLGFFSVACSLLAAALLPGPREAPAAAAA). The propeptide at 32–111 (FESGLDLSDA…RTEETIKFAA (80 aa)) is or 102. Cystine bridges form between cysteine 131–cysteine 173, cysteine 162–cysteine 209, and cysteine 166–cysteine 211. Asparagine 175, asparagine 205, and asparagine 240 each carry an N-linked (GlcNAc...) asparagine glycan. A propeptide spanning residues 228–419 (SLPATLPQCQ…PSYWKRPQMS (192 aa)) is cleaved from the precursor. 4 repeat units span residues 280 to 295 (CGPNKELDEETCQCVC), 304 to 319 (CGPHKELDRNSCQCVC), 328 to 343 (CGANREFDENTCQCVC), and 347 to 362 (CPRNQPLNPGKCACEC). A 4 X 16 AA repeats of C-X(10)-C-X-C-X(1,3)-C region spans residues 280-362 (CGPNKELDEE…LNPGKCACEC (83 aa)).

Belongs to the PDGF/VEGF growth factor family. As to quaternary structure, homodimer; non-covalent and antiparallel. Interacts with FLT4/VEGFR3; the interaction is required for FLT4/VEGFR3 homodimarization and activation. Post-translationally, undergoes a complex proteolytic maturation which generates a variety of processed secreted forms with increased activity toward VEGFR-3, but only the fully processed form could activate VEGFR-2. VEGF-C first form an antiparallel homodimer linked by disulfide bonds. Before secretion, a cleavage occurs between Arg-227 and Ser-228 producing a heterotetramer. The next extracellular step of the processing removes the N-terminal propeptide. Finally the mature VEGF-C is composed mostly of two VEGF homology domains (VHDs) bound by non-covalent interactions. Expressed in the spleen. Expressed in the lymph node, thymus, appendix and bone marrow. Expressed in the heart, placenta, skeletal muscle, ovary and small intestine. Expressed in the prostate, testis and colon.

It is found in the secreted. Functionally, growth factor active in angiogenesis, and endothelial cell growth, stimulating their proliferation and migration and also has effects on the permeability of blood vessels. May function in angiogenesis of the venous and lymphatic vascular systems during embryogenesis, and also in the maintenance of differentiated lymphatic endothelium in adults. Binds and activates KDR/VEGFR2 and FLT4/VEGFR3 receptors. The protein is Vascular endothelial growth factor C (VEGFC) of Homo sapiens (Human).